Here is a 1067-residue protein sequence, read N- to C-terminus: Sal-like protein 4 (1067 aa).

Positions 1 to 62 (MSRRKQAKPQ…SEDSIPVKRP (62 aa)) are disordered. Over residues 15–42 (EEGQGEQPQQLPSPDLAEALAAEEPGAP) the composition is skewed to low complexity. Serine 53 carries the post-translational modification Phosphoserine. Residues 68–90 (HICNKCCAEFFSLSEFMEHKKSC) form a C2H2-type 1; atypical zinc finger. Positions 115–140 (ALSHQLGSPSNKDSLQENGSSSGDLK) are disordered. A compositionally biased stretch (polar residues) spans 119–137 (QLGSPSNKDSLQENGSSSG). Residue lysine 151 forms a Glycyl lysine isopeptide (Lys-Gly) (interchain with G-Cter in SUMO1); alternate linkage. Lysine 151 is covalently cross-linked (Glycyl lysine isopeptide (Lys-Gly) (interchain with G-Cter in SUMO2); alternate). Residues lysine 170, lysine 185, and lysine 291 each participate in a glycyl lysine isopeptide (Lys-Gly) (interchain with G-Cter in SUMO2) cross-link. Serine 308 is modified (phosphoserine). Residue lysine 317 forms a Glycyl lysine isopeptide (Lys-Gly) (interchain with G-Cter in SUMO1); alternate linkage. Lysine 317 is covalently cross-linked (Glycyl lysine isopeptide (Lys-Gly) (interchain with G-Cter in SUMO2); alternate). A Glycyl lysine isopeptide (Lys-Gly) (interchain with G-Cter in SUMO2) cross-link involves residue lysine 377. Lysine 379 is covalently cross-linked (Glycyl lysine isopeptide (Lys-Gly) (interchain with G-Cter in SUMO1); alternate). Lysine 379 is covalently cross-linked (Glycyl lysine isopeptide (Lys-Gly) (interchain with G-Cter in SUMO2); alternate). C2H2-type zinc fingers lie at residues 387–409 (HKCR…LRSH) and 415–437 (YVCP…LQRH). Residue lysine 441 forms a Glycyl lysine isopeptide (Lys-Gly) (interchain with G-Cter in SUMO2) linkage. The interval 471–521 (DESSLSVDAEPVPVTGTPSLGLPQKLTSGPNSRDLMGGSLPNDMQPGPSPE) is disordered. A Glycyl lysine isopeptide (Lys-Gly) (interchain with G-Cter in SUMO2) cross-link involves residue lysine 557. 2 C2H2-type zinc fingers span residues 573 to 595 (NECL…YRTH) and 601 to 623 (FQCK…LGVH). Glycyl lysine isopeptide (Lys-Gly) (interchain with G-Cter in SUMO2) cross-links involve residues lysine 604 and lysine 630. The C2H2-type 6 zinc finger occupies 633-655 (HSCPICQKKFTNAVMLQQHIRMH). Disordered regions lie at residues 682–716 (ENGS…STVS) and 752–835 (RQSS…SLPP). Positions 693-704 (DAAEGMEAEEVC) are enriched in acidic residues. Polar residues-rich tracts occupy residues 707-716 (DVPSGPSTVS) and 752-761 (RQSSRENSSL). Phosphoserine occurs at positions 785 and 798. A compositionally biased stretch (polar residues) spans 798–809 (SPANSQAGSVKS). Residues 810–829 (RSPEGHKAEGVESCRVDTEG) show a composition bias toward basic and acidic residues. Lysine 846 is covalently cross-linked (Glycyl lysine isopeptide (Lys-Gly) (interchain with G-Cter in SUMO1); alternate). Lysine 846 participates in a covalent cross-link: Glycyl lysine isopeptide (Lys-Gly) (interchain with G-Cter in SUMO2); alternate. The segment at 880-902 (HCCTRCGKNFSSASALQIHERTH) adopts a C2H2-type 7 zinc-finger fold. Lysine 906 is covalently cross-linked (Glycyl lysine isopeptide (Lys-Gly) (interchain with G-Cter in SUMO2)). A C2H2-type 8 zinc finger spans residues 908-930 (FVCNICGRAFTTKGNLKVHYMTH). Glycyl lysine isopeptide (Lys-Gly) (interchain with G-Cter in SUMO2) cross-links involve residues lysine 942 and lysine 957. Serine 1029 bears the Phosphoserine mark.

Belongs to the sal C2H2-type zinc-finger protein family. In terms of assembly, interacts with POU5F1/OCT4. Interacts with NANOG. Interacts with BEND3. Interacts with NSD2 (via PHD-type zinc fingers 1, 2 and 3). Interacts with NRBP1. Post-translationally, sumoylation with both SUMO1 and SUMO2 regulates the stability, subcellular localization, transcriptional activity, and may reduce interaction with POU5F1/OCT4.

The protein resides in the cytoplasm. The protein localises to the nucleus. Its function is as follows. Transcription factor with a key role in the maintenance and self-renewal of embryonic and hematopoietic stem cells. In Mus musculus (Mouse), this protein is Sal-like protein 4 (Sall4).